Here is a 94-residue protein sequence, read N- to C-terminus: NADH-ubiquinone oxidoreductase 10.5 kDa subunit (94 aa).

It belongs to the complex I NDUFA2 subunit family. As to quaternary structure, complex I is composed of about 40 different subunits.

The protein resides in the mitochondrion inner membrane. Accessory subunit of the mitochondrial membrane respiratory chain NADH dehydrogenase (Complex I), that is believed not to be involved in catalysis. Complex I functions in the transfer of electrons from NADH to the respiratory chain. The immediate electron acceptor for the enzyme is believed to be ubiquinone. The protein is NADH-ubiquinone oxidoreductase 10.5 kDa subunit (nuo-10.5) of Neurospora crassa (strain ATCC 24698 / 74-OR23-1A / CBS 708.71 / DSM 1257 / FGSC 987).